Reading from the N-terminus, the 339-residue chain is MVSERSLDVLRAIVQDYVSSCEPVGSKSIVERHSFGVSAATIRNDMALLEEEELIAAPHTSSGRIPTDKGYRLFVDHLAEARPLSPAQRTAIEILLGQSVDLDDVLSRTVRLLSQLTNQTAIVQYPSLSRSRIRHIELVSLAPRRLLSVLITDSGAVEQRVIELTDELAEADIAEIRGAINGAAAGLSLADAAVRLSELPDALADRARALVAPVASALLDQIAANRQDRLMMAGAANLVRTGDDFPSSITPVLEAIEEQVVLLRLFDEMAHDQHSVAVSIGRENDGFGLTEASVMSSGYSSAGADIARVGLIGPLRMDYSGNMAAVRAVARYLSRLLGD.

It belongs to the HrcA family.

In terms of biological role, negative regulator of class I heat shock genes (grpE-dnaK-dnaJ and groELS operons). Prevents heat-shock induction of these operons. This is Heat-inducible transcription repressor HrcA from Leifsonia xyli subsp. xyli (strain CTCB07).